We begin with the raw amino-acid sequence, 194 residues long: Large ribosomal subunit protein uL6x (194 aa).

Threonine 75 bears the Phosphothreonine mark.

This sequence belongs to the universal ribosomal protein uL6 family.

This is Large ribosomal subunit protein uL6x (RPL9D) from Arabidopsis thaliana (Mouse-ear cress).